Reading from the N-terminus, the 95-residue chain is Aspartyl/glutamyl-tRNA(Asn/Gln) amidotransferase subunit C (95 aa).

It belongs to the GatC family. As to quaternary structure, heterotrimer of A, B and C subunits.

The enzyme catalyses L-glutamyl-tRNA(Gln) + L-glutamine + ATP + H2O = L-glutaminyl-tRNA(Gln) + L-glutamate + ADP + phosphate + H(+). It catalyses the reaction L-aspartyl-tRNA(Asn) + L-glutamine + ATP + H2O = L-asparaginyl-tRNA(Asn) + L-glutamate + ADP + phosphate + 2 H(+). Its function is as follows. Allows the formation of correctly charged Asn-tRNA(Asn) or Gln-tRNA(Gln) through the transamidation of misacylated Asp-tRNA(Asn) or Glu-tRNA(Gln) in organisms which lack either or both of asparaginyl-tRNA or glutaminyl-tRNA synthetases. The reaction takes place in the presence of glutamine and ATP through an activated phospho-Asp-tRNA(Asn) or phospho-Glu-tRNA(Gln). The protein is Aspartyl/glutamyl-tRNA(Asn/Gln) amidotransferase subunit C of Sinorhizobium fredii (strain NBRC 101917 / NGR234).